The primary structure comprises 303 residues: Probable acetylxylan esterase A (303 aa).

The N-terminal stretch at 1–23 (MLSTHLLFLATTLLTSLFHPIAA) is a signal peptide. Residue serine 147 is the Charge relay system of the active site. Asparagine 189 is a glycosylation site (N-linked (GlcNAc...) asparagine).

The protein belongs to the carbohydrate esterase 1 (CE1) family. AxeA subfamily. As to quaternary structure, monomer.

The protein resides in the secreted. It carries out the reaction Deacetylation of xylans and xylo-oligosaccharides.. The protein operates within glycan degradation; xylan degradation. Functionally, acetylxylan esterase involved in the hydrolysis of xylan, a major structural heterogeneous polysaccharide found in plant biomass representing the second most abundant polysaccharide in the biosphere, after cellulose. Degrades acetylated xylans by cleaving acetyl side groups from the hetero-xylan backbone. The polypeptide is Probable acetylxylan esterase A (axeA) (Aspergillus niger (strain ATCC MYA-4892 / CBS 513.88 / FGSC A1513)).